The chain runs to 97 residues: Protein RnfH (97 aa).

The protein belongs to the UPF0125 (RnfH) family.

In Aliivibrio salmonicida (strain LFI1238) (Vibrio salmonicida (strain LFI1238)), this protein is Protein RnfH.